Consider the following 408-residue polypeptide: CCA-adding enzyme (408 aa).

The ATP site is built by Gly-8 and Arg-11. CTP is bound by residues Gly-8 and Arg-11. Residues Glu-21 and Asp-23 each contribute to the Mg(2+) site. Residues Arg-91, Arg-137, and Arg-140 each coordinate ATP. Arg-91, Arg-137, and Arg-140 together coordinate CTP. In terms of domain architecture, HD spans 226–329 (TGYYTMTTLS…MTLFHVFDCW (104 aa)).

This sequence belongs to the tRNA nucleotidyltransferase/poly(A) polymerase family. Bacterial CCA-adding enzyme type 2 subfamily. The cofactor is Mg(2+).

The catalysed reaction is a tRNA precursor + 2 CTP + ATP = a tRNA with a 3' CCA end + 3 diphosphate. It catalyses the reaction a tRNA with a 3' CCA end + 2 CTP + ATP = a tRNA with a 3' CCACCA end + 3 diphosphate. In terms of biological role, catalyzes the addition and repair of the essential 3'-terminal CCA sequence in tRNAs without using a nucleic acid template. Adds these three nucleotides in the order of C, C, and A to the tRNA nucleotide-73, using CTP and ATP as substrates and producing inorganic pyrophosphate. tRNA 3'-terminal CCA addition is required both for tRNA processing and repair. Also involved in tRNA surveillance by mediating tandem CCA addition to generate a CCACCA at the 3' terminus of unstable tRNAs. While stable tRNAs receive only 3'-terminal CCA, unstable tRNAs are marked with CCACCA and rapidly degraded. This chain is CCA-adding enzyme, found in Blochmanniella pennsylvanica (strain BPEN).